The chain runs to 340 residues: Delta-aminolevulinic acid dehydratase (340 aa).

Positions 134, 136, and 144 each coordinate Zn(2+). Residue Lys-211 is the Schiff-base intermediate with substrate of the active site. 5-aminolevulinate is bound by residues Arg-221 and Arg-233. Lys-264 functions as the Schiff-base intermediate with substrate in the catalytic mechanism. Residues Ser-291 and Tyr-330 each contribute to the 5-aminolevulinate site.

It belongs to the ALAD family. As to quaternary structure, homooctamer. Zn(2+) is required as a cofactor.

The catalysed reaction is 2 5-aminolevulinate = porphobilinogen + 2 H2O + H(+). It functions in the pathway porphyrin-containing compound metabolism; protoporphyrin-IX biosynthesis; coproporphyrinogen-III from 5-aminolevulinate: step 1/4. Its function is as follows. Catalyzes an early step in the biosynthesis of tetrapyrroles. Binds two molecules of 5-aminolevulinate per subunit, each at a distinct site, and catalyzes their condensation to form porphobilinogen. In Eremothecium gossypii (strain ATCC 10895 / CBS 109.51 / FGSC 9923 / NRRL Y-1056) (Yeast), this protein is Delta-aminolevulinic acid dehydratase (HEM2).